A 294-amino-acid polypeptide reads, in one-letter code: MLENLSTEHRNEKTMNLDEMSIKEVLQSMNEEDRTVALAVENEIEEIEKVVQIVTKSFEEEGRLIYIGAGTSGRLGILDAVECPPTFGTDDNMVQGFIAGGLKAFTKAVEGAEDREELAKEDLKSIGLNEKDTVIGIAASGRTPYVIGGLKYASSVGASTASISCNKNAEISKYAKLNVEVETGAEILTGSTRLKAGTAQKLVLNMISTASMIGVGKVYKNLMVDVQSTNEKLVERSKRIIVEATGASYEVATECYEKADRNVKAAIVMILLQCEYGEALEKLKGAKGFVKKAL.

The SIS domain maps to 54–217 (VTKSFEEEGR…STASMIGVGK (164 aa)). Residue glutamate 82 is the Proton donor of the active site. The active site involves glutamate 113.

This sequence belongs to the GCKR-like family. MurNAc-6-P etherase subfamily. In terms of assembly, homodimer.

The enzyme catalyses N-acetyl-D-muramate 6-phosphate + H2O = N-acetyl-D-glucosamine 6-phosphate + (R)-lactate. The protein operates within amino-sugar metabolism; N-acetylmuramate degradation. Specifically catalyzes the cleavage of the D-lactyl ether substituent of MurNAc 6-phosphate, producing GlcNAc 6-phosphate and D-lactate. The sequence is that of N-acetylmuramic acid 6-phosphate etherase from Bacillus mycoides (strain KBAB4) (Bacillus weihenstephanensis).